A 261-amino-acid chain; its full sequence is Proteasome subunit beta type-2 (261 aa).

The propeptide at 1-29 is removed in mature form; it reads MAGLSFDNYQRNNFLAENSHTQPKATSTG. Thr30 functions as the Nucleophile in the catalytic mechanism.

Belongs to the peptidase T1B family. As to quaternary structure, the 26S proteasome consists of a 20S proteasome core and two 19S regulatory subunits. The 20S proteasome core is composed of 28 subunits that are arranged in four stacked rings, resulting in a barrel-shaped structure. The two end rings are each formed by seven alpha subunits, and the two central rings are each formed by seven beta subunits. The catalytic chamber with the active sites is on the inside of the barrel.

Its subcellular location is the cytoplasm. It localises to the nucleus. The enzyme catalyses Cleavage of peptide bonds with very broad specificity.. Functionally, the proteasome degrades poly-ubiquitinated proteins in the cytoplasm and in the nucleus. It is essential for the regulated turnover of proteins and for the removal of misfolded proteins. The proteasome is a multicatalytic proteinase complex that is characterized by its ability to cleave peptides with Arg, Phe, Tyr, Leu, and Glu adjacent to the leaving group at neutral or slightly basic pH. It has an ATP-dependent proteolytic activity. This Saccharomyces cerevisiae (strain ATCC 204508 / S288c) (Baker's yeast) protein is Proteasome subunit beta type-2 (PUP1).